A 112-amino-acid chain; its full sequence is DNA-binding protein Mboo_1886 (112 aa).

This sequence belongs to the PDCD5 family.

In Methanoregula boonei (strain DSM 21154 / JCM 14090 / 6A8), this protein is DNA-binding protein Mboo_1886.